A 403-amino-acid chain; its full sequence is Phosphopentomutase 2 (403 aa).

Mn(2+) contacts are provided by Asp13, Asp298, His303, Asp339, His340, and His351.

The protein belongs to the phosphopentomutase family. Mn(2+) is required as a cofactor.

The protein localises to the cytoplasm. The enzyme catalyses 2-deoxy-alpha-D-ribose 1-phosphate = 2-deoxy-D-ribose 5-phosphate. The catalysed reaction is alpha-D-ribose 1-phosphate = D-ribose 5-phosphate. It participates in carbohydrate degradation; 2-deoxy-D-ribose 1-phosphate degradation; D-glyceraldehyde 3-phosphate and acetaldehyde from 2-deoxy-alpha-D-ribose 1-phosphate: step 1/2. Isomerase that catalyzes the conversion of deoxy-ribose 1-phosphate (dRib-1-P) and ribose 1-phosphate (Rib-1-P) to deoxy-ribose 5-phosphate (dRib-5-P) and ribose 5-phosphate (Rib-5-P), respectively. The protein is Phosphopentomutase 2 of Streptococcus agalactiae serotype Ia (strain ATCC 27591 / A909 / CDC SS700).